We begin with the raw amino-acid sequence, 747 residues long: AMP deaminase 1 (747 aa).

Position 81 is a phosphothreonine (T81). Phosphoserine is present on S85. The residue at position 216 (Y216) is a Phosphotyrosine. Positions 303 and 305 each coordinate Zn(2+). Substrate is bound by residues H305 and 374-379; that span reads KFNDKY. At S441 the chain carries Phosphoserine. H572 contacts Zn(2+). Residue E575 coordinates substrate. H594 serves as the catalytic Proton acceptor. Zn(2+) is bound at residue D649. A substrate-binding site is contributed by 650-653; the sequence is DPMQ.

It belongs to the metallo-dependent hydrolases superfamily. Adenosine and AMP deaminases family. In terms of assembly, homotetramer. The cofactor is Zn(2+).

It catalyses the reaction AMP + H2O + H(+) = IMP + NH4(+). It functions in the pathway purine metabolism; IMP biosynthesis via salvage pathway; IMP from AMP: step 1/1. Functionally, AMP deaminase plays a critical role in energy metabolism. In Homo sapiens (Human), this protein is AMP deaminase 1.